We begin with the raw amino-acid sequence, 336 residues long: Galactose/methyl galactoside import permease protein MglC (336 aa).

The next 9 helical transmembrane spans lie at 17–37 (GIYV…PTFL), 53–73 (IIIA…LSAG), 107–127 (LVIL…GIII), 128–148 (AYLN…VYGI), 181–201 (FRLS…WVLW), 227–247 (VALN…FGGL), 257–277 (TNNL…VGGV), 279–299 (FSGG…FTVI), and 306–326 (IGVN…FAVA).

The protein belongs to the binding-protein-dependent transport system permease family. AraH/RbsC subfamily. As to quaternary structure, the complex is composed of one ATP-binding protein (MglA), two transmembrane proteins (MglC) and a solute-binding protein (MglB).

It is found in the cell inner membrane. In terms of biological role, part of the ABC transporter complex MglABC involved in galactose/methyl galactoside import. Probably responsible for the translocation of the substrate across the membrane. In Salmonella typhimurium (strain LT2 / SGSC1412 / ATCC 700720), this protein is Galactose/methyl galactoside import permease protein MglC (mglC).